Reading from the N-terminus, the 229-residue chain is 5'-methylthioadenosine/S-adenosylhomocysteine nucleosidase (229 aa).

The active-site Proton acceptor is the glutamate 12. Residues glycine 78, isoleucine 152, and 173 to 174 each bind substrate; that span reads ME. The active-site Proton donor is aspartate 197.

Belongs to the PNP/UDP phosphorylase family. MtnN subfamily.

The enzyme catalyses S-adenosyl-L-homocysteine + H2O = S-(5-deoxy-D-ribos-5-yl)-L-homocysteine + adenine. It catalyses the reaction S-methyl-5'-thioadenosine + H2O = 5-(methylsulfanyl)-D-ribose + adenine. It carries out the reaction 5'-deoxyadenosine + H2O = 5-deoxy-D-ribose + adenine. It participates in amino-acid biosynthesis; L-methionine biosynthesis via salvage pathway; S-methyl-5-thio-alpha-D-ribose 1-phosphate from S-methyl-5'-thioadenosine (hydrolase route): step 1/2. Its function is as follows. Catalyzes the irreversible cleavage of the glycosidic bond in both 5'-methylthioadenosine (MTA) and S-adenosylhomocysteine (SAH/AdoHcy) to adenine and the corresponding thioribose, 5'-methylthioribose and S-ribosylhomocysteine, respectively. Also cleaves 5'-deoxyadenosine, a toxic by-product of radical S-adenosylmethionine (SAM) enzymes, into 5-deoxyribose and adenine. This Histophilus somni (strain 129Pt) (Haemophilus somnus) protein is 5'-methylthioadenosine/S-adenosylhomocysteine nucleosidase.